A 421-amino-acid polypeptide reads, in one-letter code: Testin (421 aa).

One can recognise a PET domain in the interval M92–D199. Positions Q135–H165 are disordered. The segment covering L154 to H165 has biased composition (basic and acidic residues). 3 consecutive LIM zinc-binding domains span residues Y234 to E297, P299 to V359, and Q362 to S421.

It belongs to the prickle / espinas / testin family. As to quaternary structure, interacts via LIM domain 1 with ZYX. Interacts (via LIM domain 3) with ENAH and VASP. Interacts with ALKBH4, talin, actin, alpha-actinin, GRIP1 and PXN. Interacts (via LIM domain 2) with ACTL7A (via N-terminus). Heterodimer with ACTL7A; the heterodimer interacts with ENAH to form a heterotrimer.

It is found in the cytoplasm. The protein resides in the cell junction. Its subcellular location is the focal adhesion. In terms of biological role, scaffold protein that may play a role in cell adhesion, cell spreading and in the reorganization of the actin cytoskeleton. Plays a role in the regulation of cell proliferation. May act as a tumor suppressor. The chain is Testin (TES) from Dasypus novemcinctus (Nine-banded armadillo).